Here is a 77-residue protein sequence, read N- to C-terminus: Sec-independent protein translocase protein TatA (77 aa).

The helical transmembrane segment at methionine 1–glycine 21 threads the bilayer. The interval lysine 40–alanine 77 is disordered. The segment covering aspartate 64 to alanine 77 has biased composition (basic and acidic residues).

It belongs to the TatA/E family. In terms of assembly, the Tat system comprises two distinct complexes: a TatABC complex, containing multiple copies of TatA, TatB and TatC subunits, and a separate TatA complex, containing only TatA subunits. Substrates initially bind to the TatABC complex, which probably triggers association of the separate TatA complex to form the active translocon.

It localises to the cell inner membrane. Its function is as follows. Part of the twin-arginine translocation (Tat) system that transports large folded proteins containing a characteristic twin-arginine motif in their signal peptide across membranes. TatA could form the protein-conducting channel of the Tat system. This Burkholderia thailandensis (strain ATCC 700388 / DSM 13276 / CCUG 48851 / CIP 106301 / E264) protein is Sec-independent protein translocase protein TatA.